We begin with the raw amino-acid sequence, 186 residues long: Elongation factor P (186 aa).

This sequence belongs to the elongation factor P family.

Its subcellular location is the cytoplasm. Its pathway is protein biosynthesis; polypeptide chain elongation. In terms of biological role, involved in peptide bond synthesis. Stimulates efficient translation and peptide-bond synthesis on native or reconstituted 70S ribosomes in vitro. Probably functions indirectly by altering the affinity of the ribosome for aminoacyl-tRNA, thus increasing their reactivity as acceptors for peptidyl transferase. The chain is Elongation factor P from Shewanella sp. (strain W3-18-1).